Consider the following 439-residue polypeptide: ATP-dependent protease ATPase subunit HslU (439 aa).

Residues I17, 59–64 (GVGKTE), D251, E317, and R389 contribute to the ATP site.

Belongs to the ClpX chaperone family. HslU subfamily. A double ring-shaped homohexamer of HslV is capped on each side by a ring-shaped HslU homohexamer. The assembly of the HslU/HslV complex is dependent on binding of ATP.

The protein localises to the cytoplasm. ATPase subunit of a proteasome-like degradation complex; this subunit has chaperone activity. The binding of ATP and its subsequent hydrolysis by HslU are essential for unfolding of protein substrates subsequently hydrolyzed by HslV. HslU recognizes the N-terminal part of its protein substrates and unfolds these before they are guided to HslV for hydrolysis. In Campylobacter jejuni subsp. jejuni serotype O:6 (strain 81116 / NCTC 11828), this protein is ATP-dependent protease ATPase subunit HslU.